A 231-amino-acid chain; its full sequence is Large ribosomal subunit protein uL1 (231 aa).

Belongs to the universal ribosomal protein uL1 family. Part of the 50S ribosomal subunit.

Functionally, binds directly to 23S rRNA. The L1 stalk is quite mobile in the ribosome, and is involved in E site tRNA release. In terms of biological role, protein L1 is also a translational repressor protein, it controls the translation of the L11 operon by binding to its mRNA. The sequence is that of Large ribosomal subunit protein uL1 from Halalkalibacterium halodurans (strain ATCC BAA-125 / DSM 18197 / FERM 7344 / JCM 9153 / C-125) (Bacillus halodurans).